The sequence spans 648 residues: Macrolide export ATP-binding/permease protein MacB (648 aa).

An ABC transporter domain is found at 5 to 243; it reads LELCNVSRSY…QGVDAAVVNT (239 aa). 41-48 is an ATP binding site; sequence GVSGSGKS. A run of 5 helical transmembrane segments spans residues 273-293, 417-437, 523-543, 577-597, and 611-631; these read LLTM…VVVG, ANVV…IGVA, LFLT…VMNI, VLVC…IAFM, and LTAL…FGWL.

Belongs to the ABC transporter superfamily. Macrolide exporter (TC 3.A.1.122) family. Homodimer. Part of the tripartite efflux system MacAB-TolC, which is composed of an inner membrane transporter, MacB, a periplasmic membrane fusion protein, MacA, and an outer membrane component, TolC. The complex forms a large protein conduit and can translocate molecules across both the inner and outer membranes. Interacts with MacA.

The protein resides in the cell inner membrane. In terms of biological role, part of the tripartite efflux system MacAB-TolC. MacB is a non-canonical ABC transporter that contains transmembrane domains (TMD), which form a pore in the inner membrane, and an ATP-binding domain (NBD), which is responsible for energy generation. Confers resistance against macrolides. The chain is Macrolide export ATP-binding/permease protein MacB from Salmonella typhimurium (strain LT2 / SGSC1412 / ATCC 700720).